The following is a 180-amino-acid chain: Large ribosomal subunit protein uL5 (180 aa).

It belongs to the universal ribosomal protein uL5 family. In terms of assembly, part of the 50S ribosomal subunit; part of the 5S rRNA/L5/L18/L25 subcomplex. Contacts the 5S rRNA and the P site tRNA. Forms a bridge to the 30S subunit in the 70S ribosome.

This is one of the proteins that bind and probably mediate the attachment of the 5S RNA into the large ribosomal subunit, where it forms part of the central protuberance. In the 70S ribosome it contacts protein S13 of the 30S subunit (bridge B1b), connecting the 2 subunits; this bridge is implicated in subunit movement. Contacts the P site tRNA; the 5S rRNA and some of its associated proteins might help stabilize positioning of ribosome-bound tRNAs. The polypeptide is Large ribosomal subunit protein uL5 (Cupriavidus necator (strain ATCC 17699 / DSM 428 / KCTC 22496 / NCIMB 10442 / H16 / Stanier 337) (Ralstonia eutropha)).